A 153-amino-acid chain; its full sequence is Small ribosomal subunit protein uS13 (153 aa).

Belongs to the universal ribosomal protein uS13 family.

The protein resides in the cytoplasm. Located at the top of the head of the 40S subunit, it contacts several helices of the 18S rRNA. This chain is Small ribosomal subunit protein uS13 (RPS18), found in Chlamydomonas reinhardtii (Chlamydomonas smithii).